We begin with the raw amino-acid sequence, 423 residues long: Glutamyl-tRNA reductase (423 aa).

Residues 49–52, Ser-106, 111–113, and Gln-117 each bind substrate; these read TCNR and EPQ. The active-site Nucleophile is the Cys-50. 186–191 is an NADP(+) binding site; sequence GAGDTS.

This sequence belongs to the glutamyl-tRNA reductase family. Homodimer.

The catalysed reaction is (S)-4-amino-5-oxopentanoate + tRNA(Glu) + NADP(+) = L-glutamyl-tRNA(Glu) + NADPH + H(+). It functions in the pathway porphyrin-containing compound metabolism; protoporphyrin-IX biosynthesis; 5-aminolevulinate from L-glutamyl-tRNA(Glu): step 1/2. Catalyzes the NADPH-dependent reduction of glutamyl-tRNA(Glu) to glutamate 1-semialdehyde (GSA). This Idiomarina loihiensis (strain ATCC BAA-735 / DSM 15497 / L2-TR) protein is Glutamyl-tRNA reductase.